The following is a 61-amino-acid chain: DNA gyrase inhibitor YacG (61 aa).

4 residues coordinate Zn(2+): C14, C17, C29, and C33.

Belongs to the DNA gyrase inhibitor YacG family. In terms of assembly, interacts with GyrB. Zn(2+) serves as cofactor.

In terms of biological role, inhibits all the catalytic activities of DNA gyrase by preventing its interaction with DNA. Acts by binding directly to the C-terminal domain of GyrB, which probably disrupts DNA binding by the gyrase. This is DNA gyrase inhibitor YacG from Zymomonas mobilis subsp. mobilis (strain ATCC 31821 / ZM4 / CP4).